The chain runs to 433 residues: Probable M18 family aminopeptidase 2 (433 aa).

The Zn(2+) site is built by His79, His153, and His404.

It belongs to the peptidase M18 family. It depends on Zn(2+) as a cofactor.

This Mycobacterium tuberculosis (strain ATCC 25177 / H37Ra) protein is Probable M18 family aminopeptidase 2.